Consider the following 398-residue polypeptide: Ubiquitin-like modifier-activating enzyme 5 (398 aa).

Gly-79, Asp-100, Lys-123, Asn-146, and Asn-180 together coordinate ATP. Zn(2+)-binding residues include Cys-222 and Cys-225. The active-site Glycyl thioester intermediate is the Cys-246. Zn(2+)-binding residues include Cys-299 and Cys-304. Positions 330–342 (VVHEDNEWGIELV) match the UFM1-interacting sequence (UIS) motif. Positions 343–373 (SEVTEAELQDASGPIPDLPEGITVAYTIPEK) are linker. Positions 383 to 398 (ETEQSLEELMAQMKKI) match the UFC1-binding sequence (UFC) motif.

The protein belongs to the ubiquitin-activating E1 family. UBA5 subfamily. Homodimer; homodimerization is required for ufm1 activation. Interacts (via UIS motif) with ufm1; binds ufm1 via a trans-binding mechanism in which ufm1 interacts with distinct sites in both subunits of the uba5 homodimer. Interacts (via C-terminus) with ufc1.

The protein resides in the cytoplasm. It is found in the nucleus. It localises to the endoplasmic reticulum membrane. Its subcellular location is the golgi apparatus. In terms of biological role, E1-like enzyme which specifically catalyzes the first step in ufmylation. Activates ufm1 by first adenylating its C-terminal glycine residue with ATP, and thereafter linking this residue to the side chain of a cysteine residue in E1, yielding a ufm1-E1 thioester and free AMP. Activates ufm1 via a trans-binding mechanism, in which ufm1 interacts with distinct sites in both subunits of the uba5 homodimer. Trans-binding also promotes stabilization of the uba5 homodimer, and enhances ATP-binding. Transfer of ufm1 from uba5 to the E2-like enzyme UFC1 also takes place using a trans mechanism. Ufmylation plays a key role in various processes, such as ribosome recycling, response to DNA damage, interferon response or reticulophagy (also called ER-phagy). The chain is Ubiquitin-like modifier-activating enzyme 5 from Danio rerio (Zebrafish).